A 282-amino-acid chain; its full sequence is Pantothenate synthetase (282 aa).

An ATP-binding site is contributed by 30–37 (MGYLHAGH). The active-site Proton donor is His37. Residue Gln61 participates in (R)-pantoate binding. Gln61 is a beta-alanine binding site. 147–150 (GKKD) contacts ATP. Gln153 is a (R)-pantoate binding site. ATP contacts are provided by residues Val176 and 184-187 (MSSR).

This sequence belongs to the pantothenate synthetase family. As to quaternary structure, homodimer.

The protein resides in the cytoplasm. The enzyme catalyses (R)-pantoate + beta-alanine + ATP = (R)-pantothenate + AMP + diphosphate + H(+). The protein operates within cofactor biosynthesis; (R)-pantothenate biosynthesis; (R)-pantothenate from (R)-pantoate and beta-alanine: step 1/1. Functionally, catalyzes the condensation of pantoate with beta-alanine in an ATP-dependent reaction via a pantoyl-adenylate intermediate. The polypeptide is Pantothenate synthetase (Geotalea uraniireducens (strain Rf4) (Geobacter uraniireducens)).